Consider the following 100-residue polypeptide: Urease subunit gamma (100 aa).

Belongs to the urease gamma subunit family. Heterotrimer of UreA (gamma), UreB (beta) and UreC (alpha) subunits. Three heterotrimers associate to form the active enzyme.

It is found in the cytoplasm. It carries out the reaction urea + 2 H2O + H(+) = hydrogencarbonate + 2 NH4(+). It participates in nitrogen metabolism; urea degradation; CO(2) and NH(3) from urea (urease route): step 1/1. The protein is Urease subunit gamma of Aliivibrio fischeri (strain ATCC 700601 / ES114) (Vibrio fischeri).